Here is a 579-residue protein sequence, read N- to C-terminus: MGTWKNKNSNKKNRVSYISVPAQIINSVSSSSLHKFLDNKSSKKNTSKFFFNLRNPKLWAFSLFLLSILGISLRLGLCLSHFGSGDHESQLQSSDSNGSPKSHMGFAYIRSSTTQVEISNAKDRSLDMGVEKNETFGGHQSHLIIPNGNGHDDKNYDFWKQPDGLGYKPCLDFSIEYRRESKKILVERRKYLMVVVSGGLNQQKIQIVDAVVIARILGAVLVVPILQINLIWGDESEFSDIFDLEQFKSVLANDVKIVSLLPASKVMTRPSEDGSMPFNASPQWIRSHYPKRFNREGVLLLRRLDSRLSKDLPSDLQKLRCKVAFEALKFSPRVMEMGTKLAERMRSKGPYIALHLRMEKDVWVRTGCLSGLSSKYDEIVNIERIKRPELLTAKSSMTSNERKLAGLCPLNAKEVTRLLRALGAPRDARIYWAGGEPLGGKEALKPLTSEFPHLYNKYDIALPLELKPFAKRASIMAAIDYIVCKESDVFMASHGGNMGHAIQGHRAYEGHKKIITPNKRHMLPYFVNSSLTETEFEKMIKKLHRQSLGQPELRISKAGRDVTKYPVPECMCNQSNTTI.

A helical; Signal-anchor for type II membrane protein membrane pass occupies residues 58 to 78 (LWAFSLFLLSILGISLRLGLC). N-linked (GlcNAc...) asparagine glycosylation occurs at asparagine 133. 355 to 357 (HLR) is a substrate binding site. N-linked (GlcNAc...) asparagine glycans are attached at residues asparagine 528, asparagine 573, and asparagine 576.

The protein belongs to the glycosyltransferase GT106 family.

Its subcellular location is the membrane. It functions in the pathway glycan metabolism. This is O-fucosyltransferase 24 from Arabidopsis thaliana (Mouse-ear cress).